A 309-amino-acid chain; its full sequence is MKKPELLVTPTSTADILPLIQAGATAFLVGEQRYGLRLAGEFSREDVTKAVEIAHKEGAKVYVAVNAIFHNDKVGELGEYLAFLAEAGVDAAVFGDPAVLMAARESAPDLKLHWSTETTGTNYYTCNYWGRKGAARSVLARELNMDSIVEIKENAEVEIEIQVHGMTCMFQSKRSLIGNYFEYQGKVMDIERKKKESGMFLHDKERDNKYPIFEDENGTHIMSPNDVCIIDELEELIDAGIDSFKIDGVLKMPEYLIEVTKMYREAIDLCVENRDEYEAKKEDWIERIESIQPVNRKIDTGFFFKETVY.

Belongs to the peptidase U32 family.

In terms of biological role, involved in prephenate-dependent formation of 5-hydroxyuridine (ho5U) modification at position 34 in tRNAs, the first step in 5-methoxyuridine (mo5U) biosynthesis. The polypeptide is tRNA hydroxylation protein P2 (Bacillus subtilis (strain 168)).